Here is a 716-residue protein sequence, read N- to C-terminus: 1,4-alpha-glucan branching enzyme GlgB (716 aa).

Catalysis depends on Asp-399, which acts as the Nucleophile. Glu-452 functions as the Proton donor in the catalytic mechanism.

This sequence belongs to the glycosyl hydrolase 13 family. GlgB subfamily. Monomer.

The enzyme catalyses Transfers a segment of a (1-&gt;4)-alpha-D-glucan chain to a primary hydroxy group in a similar glucan chain.. Its pathway is glycan biosynthesis; glycogen biosynthesis. In terms of biological role, catalyzes the formation of the alpha-1,6-glucosidic linkages in glycogen by scission of a 1,4-alpha-linked oligosaccharide from growing alpha-1,4-glucan chains and the subsequent attachment of the oligosaccharide to the alpha-1,6 position. The polypeptide is 1,4-alpha-glucan branching enzyme GlgB (Rhodopseudomonas palustris (strain ATCC BAA-98 / CGA009)).